The following is a 166-amino-acid chain: Small ribosomal subunit protein uS5 (166 aa).

The S5 DRBM domain occupies 11–74 (LREKLVAINR…EKARANMKRV (64 aa)).

This sequence belongs to the universal ribosomal protein uS5 family. In terms of assembly, part of the 30S ribosomal subunit. Contacts proteins S4 and S8.

Its function is as follows. With S4 and S12 plays an important role in translational accuracy. In terms of biological role, located at the back of the 30S subunit body where it stabilizes the conformation of the head with respect to the body. In Alkalilimnicola ehrlichii (strain ATCC BAA-1101 / DSM 17681 / MLHE-1), this protein is Small ribosomal subunit protein uS5.